Reading from the N-terminus, the 158-residue chain is Transcription antitermination protein NusB (158 aa).

Residues 1–13 show a composition bias toward polar residues; the sequence is MSEAGDTSPQPGK. Positions 1–24 are disordered; the sequence is MSEAGDTSPQPGKTGQPKAGDRRR.

This sequence belongs to the NusB family.

Functionally, involved in transcription antitermination. Required for transcription of ribosomal RNA (rRNA) genes. Binds specifically to the boxA antiterminator sequence of the ribosomal RNA (rrn) operons. The chain is Transcription antitermination protein NusB from Marinobacter nauticus (strain ATCC 700491 / DSM 11845 / VT8) (Marinobacter aquaeolei).